The primary structure comprises 413 residues: Type IV pilus assembly protein TapC (413 aa).

A run of 4 helical transmembrane segments spans residues 180 to 200 (YPAM…LFVI), 227 to 247 (FMQH…FLYV), 286 to 306 (LSTT…AAGA), and 386 to 406 (IMVV…LPIF).

The protein belongs to the GSP F family.

The protein localises to the cell inner membrane. Functionally, involved in the translocation of the type IV pilin. The sequence is that of Type IV pilus assembly protein TapC (tapC) from Aeromonas hydrophila.